Here is a 382-residue protein sequence, read N- to C-terminus: UDP-4-amino-4-deoxy-L-arabinose--oxoglutarate aminotransferase (382 aa).

K183 is subject to N6-(pyridoxal phosphate)lysine.

This sequence belongs to the DegT/DnrJ/EryC1 family. ArnB subfamily. In terms of assembly, homodimer. The cofactor is pyridoxal 5'-phosphate.

It catalyses the reaction UDP-4-amino-4-deoxy-beta-L-arabinose + 2-oxoglutarate = UDP-beta-L-threo-pentopyranos-4-ulose + L-glutamate. It participates in nucleotide-sugar biosynthesis; UDP-4-deoxy-4-formamido-beta-L-arabinose biosynthesis; UDP-4-deoxy-4-formamido-beta-L-arabinose from UDP-alpha-D-glucuronate: step 2/3. It functions in the pathway bacterial outer membrane biogenesis; lipopolysaccharide biosynthesis. In terms of biological role, catalyzes the conversion of UDP-4-keto-arabinose (UDP-Ara4O) to UDP-4-amino-4-deoxy-L-arabinose (UDP-L-Ara4N). The modified arabinose is attached to lipid A and is required for resistance to polymyxin and cationic antimicrobial peptides. In Pseudomonas fluorescens (strain Pf0-1), this protein is UDP-4-amino-4-deoxy-L-arabinose--oxoglutarate aminotransferase.